The following is an 869-amino-acid chain: Bifunctional uridylyltransferase/uridylyl-removing enzyme (869 aa).

The uridylyltransferase stretch occupies residues 1–332; the sequence is MTATPADRPD…QFDGEAVPVQ (332 aa). The interval 333–691 is uridylyl-removing; it reads LDAGFSLRRG…RRAVPDNDAL (359 aa). One can recognise an HD domain in the interval 450-572; it reads VDQHTLMVLR…VGTRERLDYL (123 aa). ACT domains lie at 692–771 and 798–869; these read EVFV…PSRR and RISL…LDPT.

This sequence belongs to the GlnD family. Mg(2+) serves as cofactor.

It catalyses the reaction [protein-PII]-L-tyrosine + UTP = [protein-PII]-uridylyl-L-tyrosine + diphosphate. The enzyme catalyses [protein-PII]-uridylyl-L-tyrosine + H2O = [protein-PII]-L-tyrosine + UMP + H(+). Uridylyltransferase (UTase) activity is inhibited by glutamine, while glutamine activates uridylyl-removing (UR) activity. Its function is as follows. Modifies, by uridylylation and deuridylylation, the PII regulatory proteins (GlnB and homologs), in response to the nitrogen status of the cell that GlnD senses through the glutamine level. Under low glutamine levels, catalyzes the conversion of the PII proteins and UTP to PII-UMP and PPi, while under higher glutamine levels, GlnD hydrolyzes PII-UMP to PII and UMP (deuridylylation). Thus, controls uridylylation state and activity of the PII proteins, and plays an important role in the regulation of nitrogen assimilation and metabolism. This Xanthomonas campestris pv. campestris (strain 8004) protein is Bifunctional uridylyltransferase/uridylyl-removing enzyme.